We begin with the raw amino-acid sequence, 227 residues long: C4-dicarboxylate TRAP transporter small permease protein DctQ (227 aa).

Over 1–7 (MLRILDR) the chain is Cytoplasmic. Residues 8-28 (AEEVLIAALIATATVLIFVSV) form a helical membrane-spanning segment. Topologically, residues 29-67 (THRFTLGFVADFVGFFRGHGMTGAAAAAKSLYTTLRGIN) are periplasmic. The chain crosses the membrane as a helical span at residues 68-88 (LVWAQELCIILFVWMAKFGAA). Residues 89 to 112 (YGVRTGIHVGIDVLINRLDAPKRR) are Cytoplasmic-facing. The helical transmembrane segment at 113 to 133 (FFILLGLGAGALFTGIIATLG) threads the bilayer. Residues 134-149 (ANFVLHMYHASSTSPD) lie on the Periplasmic side of the membrane. A helical membrane pass occupies residues 150–170 (LELPMWLVYLAIPMGSSLMCF). Residues 171-227 (RFLQVAFGFARTGELPHHDHGHVDGVDTENEGIDAEGDVLLHSPLTPRDLVEKPKDN) lie on the Cytoplasmic side of the membrane.

The protein belongs to the TRAP transporter small permease family. The complex comprises the extracytoplasmic solute receptor protein DctP, and the two transmembrane proteins DctQ and DctM.

The protein localises to the cell inner membrane. In terms of biological role, part of the tripartite ATP-independent periplasmic (TRAP) transport system DctPQM involved in C4-dicarboxylates uptake. In Rhodobacter capsulatus (Rhodopseudomonas capsulata), this protein is C4-dicarboxylate TRAP transporter small permease protein DctQ.